The chain runs to 592 residues: Cell division protein FtsZ (592 aa).

Residues 24–28, 111–113, E142, R146, and D190 contribute to the GTP site; these read GGGGN and GTG. A disordered region spans residues 333 to 362; that stretch reads KFQKSVSSVRKNDSGINQTASHPQSSQLRS.

It belongs to the FtsZ family. Homodimer. Polymerizes to form a dynamic ring structure in a strictly GTP-dependent manner. Interacts directly with several other division proteins.

It localises to the cytoplasm. Essential cell division protein that forms a contractile ring structure (Z ring) at the future cell division site. The regulation of the ring assembly controls the timing and the location of cell division. One of the functions of the FtsZ ring is to recruit other cell division proteins to the septum to produce a new cell wall between the dividing cells. Binds GTP and shows GTPase activity. This is Cell division protein FtsZ from Bartonella bacilliformis.